Here is a 263-residue protein sequence, read N- to C-terminus: LOB domain-containing protein 41 (263 aa).

The LOB domain maps to 3–109 (MSCNGCRVLR…VEAVMKGEPV (107 aa)). The segment at 162-204 (TVAIQAESEGKSDEASHDSSLSHQSEIVAAHEGESKESESNVS) is disordered. 2 stretches are compositionally biased toward basic and acidic residues: residues 169–178 (SEGKSDEASH) and 190–200 (AAHEGESKESE).

This sequence belongs to the LOB domain-containing protein family. As to expression, expressed in young shoots, roots, stems, leaves and flowers.

This is LOB domain-containing protein 41 (LBD41) from Arabidopsis thaliana (Mouse-ear cress).